Consider the following 620-residue polypeptide: MFDFQHQLKILPDKPGVYIMKNSLGEVIYVGKAKVLKNRVRQYFQNSKNHSEKVRAMVKNIAEFEYIVTDSEMEALILECNLIKKYSPRYNIALKDDKFYPFIKITTNEDFPRVYVTRNFAKDGNRYFGPYTNGTAVYEVMGLIKKLFPLRTCKKAIVEGGEPTRACLNYHINLCKAPCAGYISKAEYWKMIDEIINILNGTDTSIIKNLKLEMEKAAEELEFEKAAKIRDRILAIELISEKQKMFTVKEGDEDFIDLYTDEKDGCAQVFFVREGKVTGREHFMIENISDDPVKEVISSFIASFYGGTAQIPKTIYVPEEIEDQELIEKFLTEKRGSKVWIKVPKKGDKKNLLDMVRNNAKIMLDQFKEKMVEEKELNKSALIELADVLGLDSLPTRIEAYDISNIQGVDSVGTMVVFENGKAKNSDYRRFKIKSVKGPNDYESMREILSRRFSHGLEEVNKIKERNLEYSKGKFCIFPDLIMMDGGKGQVNIALEVLKDFGIEIPVCGLVKDDKHRTRGIIFNNEEILIRRGSGLMNLITRVQDEVHRYAITYHRSLRDKRTLHSILEDIPRIGEKRRRNLLMKFGSIDNIKKASMEELLDTPGIDKRAAESIKQYFSS.

One can recognise a GIY-YIG domain in the interval 13–92 (DKPGVYIMKN…IKKYSPRYNI (80 aa)). Residues 204-239 (TSIIKNLKLEMEKAAEELEFEKAAKIRDRILAIELI) enclose the UVR domain.

The protein belongs to the UvrC family. In terms of assembly, interacts with UvrB in an incision complex.

Its subcellular location is the cytoplasm. Functionally, the UvrABC repair system catalyzes the recognition and processing of DNA lesions. UvrC both incises the 5' and 3' sides of the lesion. The N-terminal half is responsible for the 3' incision and the C-terminal half is responsible for the 5' incision. The chain is UvrABC system protein C from Clostridium perfringens (strain SM101 / Type A).